We begin with the raw amino-acid sequence, 335 residues long: MIEADRLVSAEVLQDDEAIDRAIRPKLLSEYVGQPQVCEQMEIFIQAARQRGDALDHLLIFGPPGLGKTTLANIVANEMGVNLRTTSGPVLEKAGDLAAMLTNLEPHDVLFIDEIHRLSPVVEEILYPAMEDYQLDIMIGEGPAARSIKIDLPPFTLIGATTRAGSLTSPLRDRFGIVQRLEFYNVDDLQSIVSRSARFMGVEITDDGARQVAMRSRGTPRITNRLLRRVRDFAQVKGNGAIDGNIATRALDMLSVDAAGFDYLDRKLLIAIIDKFMGGPVGVDNLAAAIGEERETIEDVLEPFLIQQGFIQRTSRGRIATEHAYRHFGMVRNQE.

Positions Ala4–Tyr184 are large ATPase domain (RuvB-L). Residues Ile23, Arg24, Gly65, Lys68, Thr69, Thr70, Glu131 to Tyr133, Arg174, Tyr184, and Arg221 contribute to the ATP site. Thr69 serves as a coordination point for Mg(2+). The tract at residues Asn185–Ser255 is small ATPAse domain (RuvB-S). The segment at Ala258 to Glu335 is head domain (RuvB-H). Positions 294, 313, and 318 each coordinate DNA.

The protein belongs to the RuvB family. As to quaternary structure, homohexamer. Forms an RuvA(8)-RuvB(12)-Holliday junction (HJ) complex. HJ DNA is sandwiched between 2 RuvA tetramers; dsDNA enters through RuvA and exits via RuvB. An RuvB hexamer assembles on each DNA strand where it exits the tetramer. Each RuvB hexamer is contacted by two RuvA subunits (via domain III) on 2 adjacent RuvB subunits; this complex drives branch migration. In the full resolvosome a probable DNA-RuvA(4)-RuvB(12)-RuvC(2) complex forms which resolves the HJ.

It localises to the cytoplasm. It catalyses the reaction ATP + H2O = ADP + phosphate + H(+). The RuvA-RuvB-RuvC complex processes Holliday junction (HJ) DNA during genetic recombination and DNA repair, while the RuvA-RuvB complex plays an important role in the rescue of blocked DNA replication forks via replication fork reversal (RFR). RuvA specifically binds to HJ cruciform DNA, conferring on it an open structure. The RuvB hexamer acts as an ATP-dependent pump, pulling dsDNA into and through the RuvAB complex. RuvB forms 2 homohexamers on either side of HJ DNA bound by 1 or 2 RuvA tetramers; 4 subunits per hexamer contact DNA at a time. Coordinated motions by a converter formed by DNA-disengaged RuvB subunits stimulates ATP hydrolysis and nucleotide exchange. Immobilization of the converter enables RuvB to convert the ATP-contained energy into a lever motion, pulling 2 nucleotides of DNA out of the RuvA tetramer per ATP hydrolyzed, thus driving DNA branch migration. The RuvB motors rotate together with the DNA substrate, which together with the progressing nucleotide cycle form the mechanistic basis for DNA recombination by continuous HJ branch migration. Branch migration allows RuvC to scan DNA until it finds its consensus sequence, where it cleaves and resolves cruciform DNA. The chain is Holliday junction branch migration complex subunit RuvB from Photorhabdus laumondii subsp. laumondii (strain DSM 15139 / CIP 105565 / TT01) (Photorhabdus luminescens subsp. laumondii).